Here is a 2186-residue protein sequence, read N- to C-terminus: Non-reducing polyketide synthase men2 (2186 aa).

The Starter acyltransferase (SAT) domain maps to 16–255; it reads FFGDQTVDAL…MQLPLGTPAH (240 aa). The Ketosynthase family 3 (KS3) domain maps to 382–815; that stretch reads SNLIAVVGQS…GGNNCVLLEE (434 aa). Residues Cys-554, His-690, and His-729 each act as for beta-ketoacyl synthase activity in the active site. Residues 914 to 1204 enclose the Malonyl-CoA:ACP transacylase (MAT) domain; that stretch reads VFAFTGQGAQ…SSLVKSTLSA (291 aa). A product template (PT) domain region spans residues 1299-1623; that stretch reads TASLQQVRSE…TRRVLATVLG (325 aa). The interval 1303 to 1434 is N-terminal hotdog fold; it reads QQVRSEQING…CKLHFDKRGS (132 aa). The 317-residue stretch at 1303-1619 folds into the PKS/mFAS DH domain; that stretch reads QQVRSEQING…FQRLTRRVLA (317 aa). His-1335 functions as the Proton acceptor; for dehydratase activity in the catalytic mechanism. Positions 1463–1619 are C-terminal hotdog fold; the sequence is TGHRLPKSVV…FQRLTRRVLA (157 aa). Asp-1523 (proton donor; for dehydratase activity) is an active-site residue. The Carrier 1 domain occupies 1666–1742; it reads VGDEKADAAI…GLRRAISELS (77 aa). Ser-1702 carries the post-translational modification O-(pantetheine 4'-phosphoryl)serine. The disordered stretch occupies residues 1747-1785; sequence GPASGSVSVSSSATTTHGMTTPSSTSSAQSSQSSQTPDG. Residues 1749–1783 show a composition bias toward low complexity; it reads ASGSVSVSSSATTTHGMTTPSSTSSAQSSQSSQTP. A Carrier 2 domain is found at 1784–1861; that stretch reads DGPGIYANAV…HVRRALGSDS (78 aa). Residue Ser-1821 is modified to O-(pantetheine 4'-phosphoryl)serine. Residues 1857 to 1878 form a disordered region; sequence LGSDSDGDSKPKSAPAPPAPEP. Positions 1921–2163 are thioesterase (TE) domain; that stretch reads LFFLPDGTGY…TMPCDHLSLL (243 aa).

It depends on pantetheine 4'-phosphate as a cofactor.

Its pathway is secondary metabolite biosynthesis. Its function is as follows. Non-reducing polyketide synthase; part of the gene cluster that mediates the biosynthesis of menisporopsin A, a bioactive macrocyclic polylactone. The biosynthesis of menisporopsin A is performed by a reducing (man1) and a non-reducing (men2) polyketide synthase that catalyze the formation of each menisporopsin A subunits, while the esterification and cyclolactonization activities are probably peformed by the unusual thioesterase domain of men2. First, a reduced diketide intermediate, 3-hydroxybutyryl-S-ACP is produced by men1 and transferred to men2; this is followed by a second reduced diketide which is further elongated using 3 units of malonyl-coA to form a reduced pentaketide. The cyclization of this intermediate by the PT domain forms the second subunit, 2,4-dihydroxy-6-(2-hydroxy-n-propyl)benzoyl-S-ACP. The TE domain of men2 then esterifies the secondary hydroxyl group on the side chain of the second subunit with the acyl-TE of the first subunit to form the first ester intermediate. This process occurs iteratively to form a linear tetraester intermediate. The final subunit is formed by a similar process, except that an extra malonyl-CoA is required in an additional elongation step to form a reduced hexaketide intermediate, and the carbonyl group next to the secondary hydroxyl group is reduced by a trans-acting ketoreductase. Again, the PT domain catalyzes cyclization to form the largest subunit, 2,4-dihydroxy-6-(2,4-dihydroxy-n-pentyl) benzoyl-S-ACP. Then the linear pentaester intermediate is formed. In this step, if the intermediate transfer rate is slow, intra- molecular cyclization involving the secondary hydroxyl group of the pentaester intermediate may occur to form menisporopsin B. Alternatively, transfer of the pentaester intermediate to the TE domain would allow cyclolactonization to be catalyzed by the TE to form menisporopsin A. The protein is Non-reducing polyketide synthase men2 of Menisporopsis theobromae.